Consider the following 379-residue polypeptide: Chaperone protein DnaJ (379 aa).

A J domain is found at 5–70 (DYYEVLGVGK…EKKAAYDQYG (66 aa)). The CR-type zinc-finger motif lies at 139 to 217 (GHEAQIRVPH…CHGQGKLKSQ (79 aa)). 8 residues coordinate Zn(2+): C152, C155, C169, C172, C191, C194, C205, and C208. CXXCXGXG motif repeat units follow at residues 152 to 159 (CDHCHGNG), 169 to 176 (CPTCHGAG), 191 to 198 (CPKCHGSG), and 205 to 212 (CTKCHGQG). The disordered stretch occupies residues 356-379 (VHEGGSRHSPQEQSWLDKVKSFFS).

The protein belongs to the DnaJ family. As to quaternary structure, homodimer. The cofactor is Zn(2+).

The protein resides in the cytoplasm. Participates actively in the response to hyperosmotic and heat shock by preventing the aggregation of stress-denatured proteins and by disaggregating proteins, also in an autonomous, DnaK-independent fashion. Unfolded proteins bind initially to DnaJ; upon interaction with the DnaJ-bound protein, DnaK hydrolyzes its bound ATP, resulting in the formation of a stable complex. GrpE releases ADP from DnaK; ATP binding to DnaK triggers the release of the substrate protein, thus completing the reaction cycle. Several rounds of ATP-dependent interactions between DnaJ, DnaK and GrpE are required for fully efficient folding. Also involved, together with DnaK and GrpE, in the DNA replication of plasmids through activation of initiation proteins. The polypeptide is Chaperone protein DnaJ (Cupriavidus pinatubonensis (strain JMP 134 / LMG 1197) (Cupriavidus necator (strain JMP 134))).